Here is a 707-residue protein sequence, read N- to C-terminus: Polyribonucleotide nucleotidyltransferase (707 aa).

Mg(2+) is bound by residues aspartate 486 and aspartate 492. The KH domain occupies 553–612 (PRIHIIKINPEKIKDVIGKGGSVIRMLTEETGTIIEIEDDGTVKISSTVKEKAKNAIRRI). Positions 622–690 (GRIYSGKVTR…RQGRLRLSIK (69 aa)) constitute an S1 motif domain.

The protein belongs to the polyribonucleotide nucleotidyltransferase family. As to quaternary structure, component of the RNA degradosome, which is a multiprotein complex involved in RNA processing and mRNA degradation. Mg(2+) is required as a cofactor.

The protein localises to the cytoplasm. It catalyses the reaction RNA(n+1) + phosphate = RNA(n) + a ribonucleoside 5'-diphosphate. Involved in mRNA degradation. Catalyzes the phosphorolysis of single-stranded polyribonucleotides processively in the 3'- to 5'-direction. The protein is Polyribonucleotide nucleotidyltransferase of Buchnera aphidicola subsp. Acyrthosiphon pisum (strain 5A).